The sequence spans 199 residues: Large ribosomal subunit protein bL25 (199 aa).

The protein belongs to the bacterial ribosomal protein bL25 family. CTC subfamily. As to quaternary structure, part of the 50S ribosomal subunit; part of the 5S rRNA/L5/L18/L25 subcomplex. Contacts the 5S rRNA. Binds to the 5S rRNA independently of L5 and L18.

Its function is as follows. This is one of the proteins that binds to the 5S RNA in the ribosome where it forms part of the central protuberance. This is Large ribosomal subunit protein bL25 from Chlorobaculum tepidum (strain ATCC 49652 / DSM 12025 / NBRC 103806 / TLS) (Chlorobium tepidum).